The chain runs to 382 residues: (R,R)-butanediol dehydrogenase (382 aa).

Cys-39 is a binding site for Zn(2+). Residue Ser-63 is modified to Phosphoserine. Zn(2+) is bound by residues His-73, Cys-103, Cys-120, Cys-123, Cys-131, and Glu-173.

Belongs to the zinc-containing alcohol dehydrogenase family. As to quaternary structure, homodimer. Zn(2+) is required as a cofactor.

Its subcellular location is the cytoplasm. The catalysed reaction is (R,R)-butane-2,3-diol + NAD(+) = (R)-acetoin + NADH + H(+). In terms of biological role, NAD-dependent (R,R)-butanediol dehydrogenase which catalyzes oxidation of (R,R)-butane-2,3-diol to (3R)-acetoin, of meso-butanediol to (3S)-acetoin, and reduction of acetoin. Allows the use of 2,3-butanediol as an aerobic carbon source. The protein is (R,R)-butanediol dehydrogenase (BDH1) of Saccharomyces cerevisiae (strain ATCC 204508 / S288c) (Baker's yeast).